Here is a 178-residue protein sequence, read N- to C-terminus: Large ribosomal subunit protein bL25 (178 aa).

This sequence belongs to the bacterial ribosomal protein bL25 family. CTC subfamily. As to quaternary structure, part of the 50S ribosomal subunit; part of the 5S rRNA/L5/L18/L25 subcomplex. Contacts the 5S rRNA. Binds to the 5S rRNA independently of L5 and L18.

Its function is as follows. This is one of the proteins that binds to the 5S RNA in the ribosome where it forms part of the central protuberance. The protein is Large ribosomal subunit protein bL25 of Helicobacter pylori (strain P12).